A 360-amino-acid polypeptide reads, in one-letter code: tRNA (guanine-N(7)-)-methyltransferase (360 aa).

The tract at residues 1–32 is disordered; the sequence is MTPPPPKRQKRDEYRKATAEAASQPGPSDVAE. S-adenosyl-L-methionine contacts are provided by residues G99 and 122 to 123; that span reads EI. Positions 177-196 are disordered; sequence ADAASPVLSTDTEHTPTTLV. A compositionally biased stretch (polar residues) spans 183 to 196; the sequence is VLSTDTEHTPTTLV. S-adenosyl-L-methionine is bound by residues 209–210 and C229; that span reads NT. Residue D232 is part of the active site. 332 to 334 lines the S-adenosyl-L-methionine pocket; sequence TEE.

This sequence belongs to the class I-like SAM-binding methyltransferase superfamily. TrmB family. As to quaternary structure, forms a complex with trm82.

It localises to the nucleus. It catalyses the reaction guanosine(46) in tRNA + S-adenosyl-L-methionine = N(7)-methylguanosine(46) in tRNA + S-adenosyl-L-homocysteine. It participates in tRNA modification; N(7)-methylguanine-tRNA biosynthesis. Its function is as follows. Catalyzes the formation of N(7)-methylguanine at position 46 (m7G46) in tRNA. This Neosartorya fischeri (strain ATCC 1020 / DSM 3700 / CBS 544.65 / FGSC A1164 / JCM 1740 / NRRL 181 / WB 181) (Aspergillus fischerianus) protein is tRNA (guanine-N(7)-)-methyltransferase (trm8).